The primary structure comprises 360 residues: Peptide chain release factor 1 (360 aa).

Glutamine 236 carries the post-translational modification N5-methylglutamine.

This sequence belongs to the prokaryotic/mitochondrial release factor family. Methylated by PrmC. Methylation increases the termination efficiency of RF1.

It is found in the cytoplasm. Its function is as follows. Peptide chain release factor 1 directs the termination of translation in response to the peptide chain termination codons UAG and UAA. The chain is Peptide chain release factor 1 from Methylococcus capsulatus (strain ATCC 33009 / NCIMB 11132 / Bath).